Reading from the N-terminus, the 336-residue chain is Peroxidase 11 (336 aa).

Residues 1–20 form the signal peptide; it reads MMRLLFVFFMVHTIFIPCFS. 4 disulfides stabilise this stretch: Cys39/Cys119, Cys72/Cys77, Cys125/Cys331, and Cys204/Cys236. Catalysis depends on His70, which acts as the Proton acceptor. Ca(2+) contacts are provided by Asp71, Val74, Gly76, Asp78, and Ser80. Pro167 serves as a coordination point for substrate. His197 serves as a coordination point for heme b. Position 198 (Thr198) interacts with Ca(2+). N-linked (GlcNAc...) asparagine glycosylation is present at Asn246. Ca(2+) is bound by residues Asp251, Thr254, and Asp259.

This sequence belongs to the peroxidase family. Classical plant (class III) peroxidase subfamily. Requires heme b as cofactor. The cofactor is Ca(2+). Expressed in roots and stems.

It is found in the secreted. It carries out the reaction 2 a phenolic donor + H2O2 = 2 a phenolic radical donor + 2 H2O. Functionally, removal of H(2)O(2), oxidation of toxic reductants, biosynthesis and degradation of lignin, suberization, auxin catabolism, response to environmental stresses such as wounding, pathogen attack and oxidative stress. These functions might be dependent on each isozyme/isoform in each plant tissue. This is Peroxidase 11 (PER11) from Arabidopsis thaliana (Mouse-ear cress).